Consider the following 260-residue polypeptide: 3-deoxy-manno-octulosonate cytidylyltransferase (260 aa).

Belongs to the KdsB family.

It is found in the cytoplasm. The enzyme catalyses 3-deoxy-alpha-D-manno-oct-2-ulosonate + CTP = CMP-3-deoxy-beta-D-manno-octulosonate + diphosphate. Its pathway is nucleotide-sugar biosynthesis; CMP-3-deoxy-D-manno-octulosonate biosynthesis; CMP-3-deoxy-D-manno-octulosonate from 3-deoxy-D-manno-octulosonate and CTP: step 1/1. The protein operates within bacterial outer membrane biogenesis; lipopolysaccharide biosynthesis. Its function is as follows. Activates KDO (a required 8-carbon sugar) for incorporation into bacterial lipopolysaccharide in Gram-negative bacteria. This chain is 3-deoxy-manno-octulosonate cytidylyltransferase, found in Polaromonas naphthalenivorans (strain CJ2).